The sequence spans 318 residues: Protoheme IX farnesyltransferase (318 aa).

9 consecutive transmembrane segments (helical) span residues Ile31–Leu51, Leu55–Cys75, Ile98–Leu118, Leu125–Leu145, Ile153–Gly173, Ile181–Ile201, Ala206–Ala228, Leu238–Leu260, and Phe285–Ala305.

It belongs to the UbiA prenyltransferase family. Protoheme IX farnesyltransferase subfamily.

Its subcellular location is the cell inner membrane. It catalyses the reaction heme b + (2E,6E)-farnesyl diphosphate + H2O = Fe(II)-heme o + diphosphate. The protein operates within porphyrin-containing compound metabolism; heme O biosynthesis; heme O from protoheme: step 1/1. In terms of biological role, converts heme B (protoheme IX) to heme O by substitution of the vinyl group on carbon 2 of heme B porphyrin ring with a hydroxyethyl farnesyl side group. This is Protoheme IX farnesyltransferase from Synechococcus elongatus (strain ATCC 33912 / PCC 7942 / FACHB-805) (Anacystis nidulans R2).